We begin with the raw amino-acid sequence, 339 residues long: Phosphate acyltransferase (339 aa).

This sequence belongs to the PlsX family. Homodimer. Probably interacts with PlsY.

The protein localises to the cytoplasm. It catalyses the reaction a fatty acyl-[ACP] + phosphate = an acyl phosphate + holo-[ACP]. Its pathway is lipid metabolism; phospholipid metabolism. In terms of biological role, catalyzes the reversible formation of acyl-phosphate (acyl-PO(4)) from acyl-[acyl-carrier-protein] (acyl-ACP). This enzyme utilizes acyl-ACP as fatty acyl donor, but not acyl-CoA. The polypeptide is Phosphate acyltransferase (Clostridium perfringens (strain ATCC 13124 / DSM 756 / JCM 1290 / NCIMB 6125 / NCTC 8237 / Type A)).